We begin with the raw amino-acid sequence, 147 residues long: Small ribosomal subunit protein bS6 (147 aa).

Residues Lys107–Val147 are disordered. Acidic residues predominate over residues Thr125 to Val147.

It belongs to the bacterial ribosomal protein bS6 family.

In terms of biological role, binds together with bS18 to 16S ribosomal RNA. The chain is Small ribosomal subunit protein bS6 from Cellvibrio japonicus (strain Ueda107) (Pseudomonas fluorescens subsp. cellulosa).